The following is a 563-amino-acid chain: GTPase Obg (563 aa).

Positions 2-168 constitute an Obg domain; the sequence is SDFVDRVTVH…RDVILELKSI (167 aa). Residues 169-349 enclose the OBG-type G domain; the sequence is ADVALVGFPS…LNFALSALVH (181 aa). GTP contacts are provided by residues 175–182, 200–204, 221–224, 301–304, and 330–332; these read GFPSAGKS, FTTLV, DVPG, NKID, and STA. Residues S182 and T202 each coordinate Mg(2+). The OCT domain maps to 383 to 469; the sequence is DEGGSALEFT…ARMVEFDWDP (87 aa). Disordered regions lie at residues 478–509 and 528–563; these read LDGS…ERRA and ERKA…ETEE. Over residues 486-509 the composition is skewed to basic and acidic residues; it reads RGKDLRLEEQDPRTHRRSNAERRA.

It belongs to the TRAFAC class OBG-HflX-like GTPase superfamily. OBG GTPase family. In terms of assembly, monomer. The cofactor is Mg(2+).

The protein localises to the cytoplasm. In terms of biological role, an essential GTPase which binds GTP, GDP and possibly (p)ppGpp with moderate affinity, with high nucleotide exchange rates and a fairly low GTP hydrolysis rate. Plays a role in control of the cell cycle, stress response, ribosome biogenesis and in those bacteria that undergo differentiation, in morphogenesis control. The polypeptide is GTPase Obg (Bifidobacterium longum subsp. infantis (strain ATCC 15697 / DSM 20088 / JCM 1222 / NCTC 11817 / S12)).